A 796-amino-acid chain; its full sequence is Protein translocase subunit SecA 2 (796 aa).

ATP is bound by residues Q84, 102–106 (GEGKT), and D496.

The protein belongs to the SecA family. In terms of assembly, monomer and homodimer. Part of the essential Sec protein translocation apparatus which comprises SecA, SecYEG and auxiliary proteins SecDF. Other proteins may also be involved.

The protein localises to the cell membrane. The protein resides in the cytoplasm. It catalyses the reaction ATP + H2O + cellular proteinSide 1 = ADP + phosphate + cellular proteinSide 2.. Its function is as follows. Part of the Sec protein translocase complex. Interacts with the SecYEG preprotein conducting channel. Has a central role in coupling the hydrolysis of ATP to the transfer of proteins into and across the cell membrane, serving as an ATP-driven molecular motor driving the stepwise translocation of polypeptide chains across the membrane. The protein is Protein translocase subunit SecA 2 of Staphylococcus epidermidis (strain ATCC 35984 / DSM 28319 / BCRC 17069 / CCUG 31568 / BM 3577 / RP62A).